The chain runs to 281 residues: Ethylene-inducing xylanase 1 (281 aa).

The signal sequence occupies residues 1-19; that stretch reads MVSYKAFLITLAAVTRVLT. The N-linked (GlcNAc...) asparagine glycan is linked to Asn23. The GH11 domain maps to 32 to 220; sequence SGTPSSTGTS…SSGSSDITVG (189 aa). The active-site Nucleophile is Glu116. The Proton donor role is filled by Glu207. In terms of domain architecture, CBM1 spans 246–281; sequence TCGALYSQCGGTGFTGSQCCASGTCKYANSYYSQCL.

This sequence belongs to the glycosyl hydrolase 11 (cellulase G) family.

It catalyses the reaction Endohydrolysis of (1-&gt;4)-beta-D-xylosidic linkages in xylans.. Its pathway is glycan degradation; xylan degradation. Functionally, endo-1,4-beta-xylanase involved in the hydrolysis of xylan, a major structural heterogeneous polysaccharide found in plant biomass representing the second most abundant polysaccharide in the biosphere, after cellulose. May act as an elicitor of plant defense responses in certain plants but does not exhibit any cell death when transiently expressed in N.benthamiana. The chain is Ethylene-inducing xylanase 1 from Botryotinia fuckeliana (strain B05.10) (Noble rot fungus).